The following is a 326-amino-acid chain: MAFTPFPPRQPTASARLPLTLMTLDDWALATITGADSEKYMQGQVTADVSQMTEDQHLLAAHCDAKGKMWSNLRLFRDGDGFAWIERRSVREPQLTELKKYAVFSKVTIAPDDERVLLGVAGFQARAALANLFSELPSREKQVVKEGATTLLWFEHPAERFLIVTDEATANMLTDKLRGEAELNNSQQWLALNIEAGFPVIDAANSGQFIPQATNLQALGGISFKKGCYTGQEMVARAKFRGANKRALWLLKGSASRLPEAGEDLELKMGENWRRTGTVLAAVKLEDGQVVVQVVMNNDMEPDSIFRVRDDANTLRIEPLPYSLEE.

Residues W27 and W189 each contribute to the folate site.

It belongs to the tRNA-modifying YgfZ family.

It is found in the cytoplasm. Functionally, folate-binding protein involved in regulating the level of ATP-DnaA and in the modification of some tRNAs. It is probably a key factor in regulatory networks that act via tRNA modification, such as initiation of chromosomal replication. This chain is tRNA-modifying protein YgfZ, found in Escherichia coli O45:K1 (strain S88 / ExPEC).